We begin with the raw amino-acid sequence, 495 residues long: UDP-N-acetylmuramoyl-L-alanyl-D-glutamate--2,6-diaminopimelate ligase (495 aa).

Positions 32 and 34 each coordinate UDP-N-acetyl-alpha-D-muramoyl-L-alanyl-D-glutamate. 119-125 provides a ligand contact to ATP; the sequence is GTNGKTT. Residues Asn160, 161-162, Ser188, Gln194, and Arg196 each bind UDP-N-acetyl-alpha-D-muramoyl-L-alanyl-D-glutamate; that span reads TT. Residue Lys228 is modified to N6-carboxylysine. Meso-2,6-diaminopimelate contacts are provided by residues Arg390, 414–417, Gly465, and Glu469; that span reads DNPR. Positions 414–417 match the Meso-diaminopimelate recognition motif motif; the sequence is DNPR.

This sequence belongs to the MurCDEF family. MurE subfamily. It depends on Mg(2+) as a cofactor. Carboxylation is probably crucial for Mg(2+) binding and, consequently, for the gamma-phosphate positioning of ATP.

It is found in the cytoplasm. The catalysed reaction is UDP-N-acetyl-alpha-D-muramoyl-L-alanyl-D-glutamate + meso-2,6-diaminopimelate + ATP = UDP-N-acetyl-alpha-D-muramoyl-L-alanyl-gamma-D-glutamyl-meso-2,6-diaminopimelate + ADP + phosphate + H(+). Its pathway is cell wall biogenesis; peptidoglycan biosynthesis. Functionally, catalyzes the addition of meso-diaminopimelic acid to the nucleotide precursor UDP-N-acetylmuramoyl-L-alanyl-D-glutamate (UMAG) in the biosynthesis of bacterial cell-wall peptidoglycan. The protein is UDP-N-acetylmuramoyl-L-alanyl-D-glutamate--2,6-diaminopimelate ligase of Vibrio cholerae serotype O1 (strain ATCC 39315 / El Tor Inaba N16961).